A 528-amino-acid polypeptide reads, in one-letter code: Cytochrome P450 monooxygenase lenC (528 aa).

The chain crosses the membrane as a helical span at residues 5-27 (FVLPHPASMGASCILGLLLLTIL). Position 469 (Cys-469) interacts with heme.

It belongs to the cytochrome P450 family. Heme serves as cofactor.

It localises to the membrane. It functions in the pathway alkaloid biosynthesis. Functionally, nonribosomal peptide synthetase; part of the gene cluster that mediates the biosynthesis of the ergot alkaloids lentopeptins A and B. Within the pathway, lenC catalyzes the post-NRPS oxidative modification steps using as substrate the N-acyldiketopiperazine intermediate produced by the NRPS lenA. Lentopeptin A forms via a stereospecific hydroxylation, followed by a spontaneous bicyclic lactam core formation, while lentopeptin B is produced through an initial dehydrogenation, followed by a bicyclic lactam core formation and stereospecific hydration. The phenylalanine ammonia-lyase lenB provides the cinnamic acid starter unit to the NRPS lenA for the synthesis of the N-acyldiketopiperazine intermediate which in turn is converted into lentopeptins A and B by lenC. This Aspergillus lentulus protein is Cytochrome P450 monooxygenase lenC.